Reading from the N-terminus, the 302-residue chain is 33 kDa chaperonin (302 aa).

Cystine bridges form between Cys255/Cys257 and Cys288/Cys291.

This sequence belongs to the HSP33 family. In terms of processing, under oxidizing conditions two disulfide bonds are formed involving the reactive cysteines. Under reducing conditions zinc is bound to the reactive cysteines and the protein is inactive.

It localises to the cytoplasm. Redox regulated molecular chaperone. Protects both thermally unfolding and oxidatively damaged proteins from irreversible aggregation. Plays an important role in the bacterial defense system toward oxidative stress. The polypeptide is 33 kDa chaperonin (Caulobacter vibrioides (strain ATCC 19089 / CIP 103742 / CB 15) (Caulobacter crescentus)).